The chain runs to 271 residues: Transmembrane protein 150A (271 aa).

The Cytoplasmic segment spans residues Met1–Thr2. A helical membrane pass occupies residues Ala3–Tyr23. The Extracellular portion of the chain corresponds to Ala24–Glu75. Asn37 and Asn41 each carry an N-linked (GlcNAc...) asparagine glycan. A helical transmembrane segment spans residues Ser76 to Leu96. Residues Arg97 to Ser108 are Cytoplasmic-facing. A helical transmembrane segment spans residues Trp109–Gly129. The Extracellular portion of the chain corresponds to Asn130–His140. Residues Tyr141–Leu161 form a helical membrane-spanning segment. Topologically, residues Phe162–Arg178 are cytoplasmic. The chain crosses the membrane as a helical span at residues Ser179–Glu199. At Ser200–Glu211 the chain is on the extracellular side. The chain crosses the membrane as a helical span at residues Trp212–Ile232. The Cytoplasmic segment spans residues Ser233–Ile271.

The protein belongs to the DRAM/TMEM150 family. Interacts (via C-terminal cytoplasmic tail) with PI4KA.

Its subcellular location is the cell membrane. Regulates localization of phosphatidylinositol 4-kinase (PI4K) to the plasma membrane, possibly by reducing the association of TTC7 (TTC7A or TTC7B) with the PI4K complex. Acts as a regulator of phosphatidylinositol 4-phosphate (PtdIns(4)P) synthesis. May also play a role in fasting-induced catabolism. The sequence is that of Transmembrane protein 150A (Tmem150a) from Mus musculus (Mouse).